The sequence spans 256 residues: Large ribosomal subunit protein bL28m (256 aa).

Residues 1–55 (MPLHKVPVGLWKRLRLREGIYSRLPAHYLRSLEEARTPTPVHFRPHGAKFKINPK) constitute a mitochondrion transit peptide.

Belongs to the bacterial ribosomal protein bL28 family. As to quaternary structure, component of the mitochondrial ribosome large subunit (39S) which comprises a 16S rRNA and about 50 distinct proteins. Interacts with OXA1L.

It is found in the mitochondrion. This Bos taurus (Bovine) protein is Large ribosomal subunit protein bL28m (MRPL28).